The sequence spans 642 residues: Threonine--tRNA ligase (642 aa).

The 61-residue stretch at 1–61 (MPVIRFYDGS…REDAFIEFVD (61 aa)) folds into the TGS domain. The catalytic stretch occupies residues 243-534 (DHRKIGKFLQ…LIEECSGNLP (292 aa)). Zn(2+)-binding residues include Cys334, His385, and His511.

The protein belongs to the class-II aminoacyl-tRNA synthetase family. In terms of assembly, homodimer. Zn(2+) serves as cofactor.

It localises to the cytoplasm. The enzyme catalyses tRNA(Thr) + L-threonine + ATP = L-threonyl-tRNA(Thr) + AMP + diphosphate + H(+). In terms of biological role, catalyzes the attachment of threonine to tRNA(Thr) in a two-step reaction: L-threonine is first activated by ATP to form Thr-AMP and then transferred to the acceptor end of tRNA(Thr). Also edits incorrectly charged L-seryl-tRNA(Thr). In Buchnera aphidicola subsp. Acyrthosiphon pisum (strain APS) (Acyrthosiphon pisum symbiotic bacterium), this protein is Threonine--tRNA ligase.